A 224-amino-acid polypeptide reads, in one-letter code: MMIAGIDEAGKGPVIGPMCIGGVKIEESRAHILKVLGVADSKKLTPKKREQLAAQIKKHADGFFVLEVSPSQIDELRKIMTMNEIMVVCFSKVLEQLKPDLLYADAADVNAERFATNIRKQYSKTNPDHAKEIEIISMHQADATYPVVSAASIIAKVRRDELIEELKKEWGLDFGSGYPSDPKTKEFLLNWGKEHSGEFPEIVRQSWQTVENIREELKKTGNKN.

Positions 1–219 constitute an RNase H type-2 domain; sequence MMIAGIDEAG…VENIREELKK (219 aa). Residues Asp7, Glu8, and Asp105 each contribute to the a divalent metal cation site.

Belongs to the RNase HII family. Mn(2+) serves as cofactor. The cofactor is Mg(2+).

Its subcellular location is the cytoplasm. The catalysed reaction is Endonucleolytic cleavage to 5'-phosphomonoester.. Endonuclease that specifically degrades the RNA of RNA-DNA hybrids. The protein is Ribonuclease HII of Methanosarcina barkeri (strain Fusaro / DSM 804).